The following is a 496-amino-acid chain: Transmembrane protein 104 (496 aa).

At 1 to 10 the chain is on the cytoplasmic side; that stretch reads MAGEITETGE. The helical transmembrane segment at 11-31 threads the bilayer; the sequence is LYSSYVGLVYMFNLIVGTGAL. The Extracellular portion of the chain corresponds to 32 to 36; that stretch reads TMPKA. A helical membrane pass occupies residues 37–57; that stretch reads FATAGWLVSLVLLVFLGFMSF. Residues 58-146 lie on the Cytoplasmic side of the membrane; the sequence is VTTTFVIEAM…SMFFNKVGVN (89 aa). A helical transmembrane segment spans residues 147-167; sequence LFYFCIIVYLYGDLAIYAAAV. The Extracellular segment spans residues 168-204; the sequence is PFSLMQVTCSATGNDSCGVEADTKYNDTDRCWGPLRR. A glycan (N-linked (GlcNAc...) asparagine) is linked at N193. The chain crosses the membrane as a helical span at residues 205-225; that stretch reads VDAYRIYLAIFTLLLGPFTFF. Residues 226-233 are Cytoplasmic-facing; that stretch reads DVQKTKYL. Residues 234 to 254 form a helical membrane-spanning segment; it reads QILTSLMRWIAFAVMIVLALI. At 255–276 the chain is on the extracellular side; that stretch reads RIGHGQGEGHPPLADFSGVRNL. The chain crosses the membrane as a helical span at residues 277–297; that stretch reads FGVCVYSFMCQHSLPSLITPV. At 298-306 the chain is on the cytoplasmic side; sequence SSKRHLTRL. Residues 307-327 form a helical membrane-spanning segment; that stretch reads VFLDYVLILAFYGLLSFTAIF. The Extracellular segment spans residues 328 to 354; it reads CFRGDSLMDMYTLNFARCDVVGLAAVR. The chain crosses the membrane as a helical span at residues 355–375; that stretch reads FFLGLFPVFTISTNFPIIAVT. At 376–397 the chain is on the cytoplasmic side; it reads LRNNWKTLFHREGGTYPWVVDR. A helical transmembrane segment spans residues 398–418; the sequence is VVFPTITLVPPVLVAFCTHDL. Over 419–421 the chain is Extracellular; that stretch reads ESL. Residues 422 to 442 traverse the membrane as a helical segment; sequence VGITGAYAGTGIQYVIPAFLV. Topologically, residues 443–470 are cytoplasmic; that stretch reads YHCRRDTQLAFGCGVSNKHRSPFRHTFW. A helical transmembrane segment spans residues 471–491; it reads VGFVLLWAFSCFIFVTANIIL. The Extracellular segment spans residues 492–496; the sequence is SETKL.

Belongs to the TMEM104 family.

The protein resides in the membrane. This Homo sapiens (Human) protein is Transmembrane protein 104 (TMEM104).